The chain runs to 367 residues: Zinc transport system membrane protein TroD (367 aa).

A run of 9 helical transmembrane segments spans residues 5–25 (VVLI…FLVL), 28–48 (ISLM…LGYF), 56–76 (FVPF…AELL), 87–107 (AVGL…SLYA), 140–160 (SLVQ…LFFK), 170–190 (VLAT…MLAV), 201–221 (VGAV…LLLT), 224–244 (LLLM…SGLF), and 251–271 (GSIA…VYLF).

It belongs to the ABC-3 integral membrane protein family.

It is found in the cell membrane. In terms of biological role, part of an ATP-driven transport system TroABCD for zinc. This is Zinc transport system membrane protein TroD (troD) from Treponema pallidum (strain Nichols).